A 94-amino-acid polypeptide reads, in one-letter code: Large ribosomal subunit protein uL23 (94 aa).

Belongs to the universal ribosomal protein uL23 family. As to quaternary structure, part of the 50S ribosomal subunit. Contacts protein L29, and trigger factor when it is bound to the ribosome.

One of the early assembly proteins it binds 23S rRNA. One of the proteins that surrounds the polypeptide exit tunnel on the outside of the ribosome. Forms the main docking site for trigger factor binding to the ribosome. This is Large ribosomal subunit protein uL23 from Mycoplasma mycoides subsp. mycoides SC (strain CCUG 32753 / NCTC 10114 / PG1).